A 157-amino-acid chain; its full sequence is S-ribosylhomocysteine lyase (157 aa).

Fe cation-binding residues include histidine 54, histidine 58, and cysteine 126.

This sequence belongs to the LuxS family. As to quaternary structure, homodimer. Requires Fe cation as cofactor.

It carries out the reaction S-(5-deoxy-D-ribos-5-yl)-L-homocysteine = (S)-4,5-dihydroxypentane-2,3-dione + L-homocysteine. Functionally, involved in the synthesis of autoinducer 2 (AI-2) which is secreted by bacteria and is used to communicate both the cell density and the metabolic potential of the environment. The regulation of gene expression in response to changes in cell density is called quorum sensing. Catalyzes the transformation of S-ribosylhomocysteine (RHC) to homocysteine (HC) and 4,5-dihydroxy-2,3-pentadione (DPD). The polypeptide is S-ribosylhomocysteine lyase (Bacillus velezensis (strain DSM 23117 / BGSC 10A6 / LMG 26770 / FZB42) (Bacillus amyloliquefaciens subsp. plantarum)).